Reading from the N-terminus, the 803-residue chain is Rho guanine nucleotide exchange factor 7 (803 aa).

Position 1 is an N-acetylmethionine (Met1). Positions Met1 to Ala133 constitute a Calponin-homology (CH) domain. The residue at position 2 (Asn2) is an N-acetylthreonine. A phosphoserine mark is found at Ser153 and Ser176. The SH3 domain occupies Asn184–Ala243. 2 positions are modified to phosphoserine: Ser249 and Ser257. In terms of domain architecture, DH spans Tyr271 to Val451. A PH domain is found at Asp473 to Lys578. A phosphoserine mark is found at Ser518, Cys560, and Val579. The interval Thr580–Leu655 is disordered. Residues Pro593–Ser606 show a composition bias toward polar residues. Phosphoserine occurs at positions 645 and 664. Residues Lys678–Glu690 are compositionally biased toward basic residues. 2 disordered regions span residues Lys678 to Thr704 and Asp748 to Asp773. Basic and acidic residues predominate over residues Arg691 to Ser700. Ser694 is subject to Phosphoserine; by CaMK1. Over residues Ser752–Leu765 the composition is skewed to low complexity.

As to quaternary structure, interacts with PAK kinases through the SH3 domain. Interacts with GIT1 and TGFB1I1. Interacts with PTK2/FAK1 and RAC1. Interacts with ITCH and PARVB. Interacts with unphosphorylated PAK1. Interacts with SCRIB; interaction is direct and may play a role in regulation of apoptosis. Interacts with FRMPD4 (via N-terminus). Interacts with CaMK1. Interacts with BIN2. Interacts with YWHAZ. Interacts (via PH domain) with NOX1 (via FAD-binding FR-type domain). In terms of assembly, interacts with SNX27. Phosphorylated by PTK2/FAK1; this promotes interaction with RAC1. Phosphorylated on Ser-694 by CaMK1; enhancement of GEF activity and downstream activation of RAC1.

It localises to the cell junction. The protein resides in the focal adhesion. The protein localises to the cell projection. Its subcellular location is the ruffle. It is found in the cytoplasm. It localises to the cell cortex. The protein resides in the lamellipodium. In terms of biological role, acts as a RAC1 guanine nucleotide exchange factor (GEF) and can induce membrane ruffling. Functions in cell migration, attachment and cell spreading. Promotes targeting of RAC1 to focal adhesions. May function as a positive regulator of apoptosis. Downstream of NMDA receptors and CaMKK-CaMK1 signaling cascade, promotes the formation of spines and synapses in hippocampal neurons. This is Rho guanine nucleotide exchange factor 7 (ARHGEF7) from Homo sapiens (Human).